The following is a 317-amino-acid chain: Transaldolase (317 aa).

The active-site Schiff-base intermediate with substrate is K132.

This sequence belongs to the transaldolase family. Type 1 subfamily. Homodimer.

It localises to the cytoplasm. The enzyme catalyses D-sedoheptulose 7-phosphate + D-glyceraldehyde 3-phosphate = D-erythrose 4-phosphate + beta-D-fructose 6-phosphate. It participates in carbohydrate degradation; pentose phosphate pathway; D-glyceraldehyde 3-phosphate and beta-D-fructose 6-phosphate from D-ribose 5-phosphate and D-xylulose 5-phosphate (non-oxidative stage): step 2/3. Transaldolase is important for the balance of metabolites in the pentose-phosphate pathway. The sequence is that of Transaldolase from Histophilus somni (strain 2336) (Haemophilus somnus).